The chain runs to 91 residues: Small ribosomal subunit protein uS7 (91 aa).

This sequence belongs to the universal ribosomal protein uS7 family. In terms of assembly, part of the 30S ribosomal subunit. Contacts proteins S9 and S11.

In terms of biological role, one of the primary rRNA binding proteins, it binds directly to 16S rRNA where it nucleates assembly of the head domain of the 30S subunit. Is located at the subunit interface close to the decoding center, probably blocks exit of the E-site tRNA. This chain is Small ribosomal subunit protein uS7 (rpsG), found in Apple proliferation phytoplasma.